Consider the following 252-residue polypeptide: MSDWTPSLYLHFAAERSRPAVELLARVPLENIEYVADLGCGPGNSTALLHHRWPAARITGIDSSPAMIAEARSALPDCQFVEADIRNWQPKQALDLIFANASLQWLPDHYELFPHLVSLLSPQGVLAVQMPDNWLEPTHVLMREVAWEQNYPDRGREPLAGVHAYYDILSEAGCEVDIWRTTYYHQMPSHQAIIDWVTATGLRPWLQDLTESEQQHFLTRYHQMLEEQYPLQENGQILLAFPRLFIVARRTE.

Belongs to the methyltransferase superfamily. Tam family.

It localises to the cytoplasm. The catalysed reaction is trans-aconitate + S-adenosyl-L-methionine = (E)-3-(methoxycarbonyl)pent-2-enedioate + S-adenosyl-L-homocysteine. Functionally, catalyzes the S-adenosylmethionine monomethyl esterification of trans-aconitate. This is Trans-aconitate 2-methyltransferase from Escherichia fergusonii (strain ATCC 35469 / DSM 13698 / CCUG 18766 / IAM 14443 / JCM 21226 / LMG 7866 / NBRC 102419 / NCTC 12128 / CDC 0568-73).